The following is a 142-amino-acid chain: HTH-type transcriptional regulator MntR (142 aa).

The HTH dtxR-type domain maps to 1 to 63 (MPTPSMEDYI…YEKYRGLVLT (63 aa)). Mn(2+)-binding residues include Asp8, Glu11, His77, Glu99, Glu102, and His103.

The protein belongs to the DtxR/MntR family. As to quaternary structure, homodimer.

It localises to the cytoplasm. Its activity is regulated as follows. DNA binding is strongly activated by Mn(2+). Its function is as follows. Central regulator of manganese homeostasis. In Bacillus cereus (strain AH820), this protein is HTH-type transcriptional regulator MntR.